The chain runs to 97 residues: Co-chaperonin GroES (97 aa).

The protein belongs to the GroES chaperonin family. In terms of assembly, heptamer of 7 subunits arranged in a ring. Interacts with the chaperonin GroEL.

The protein resides in the cytoplasm. In terms of biological role, together with the chaperonin GroEL, plays an essential role in assisting protein folding. The GroEL-GroES system forms a nano-cage that allows encapsulation of the non-native substrate proteins and provides a physical environment optimized to promote and accelerate protein folding. GroES binds to the apical surface of the GroEL ring, thereby capping the opening of the GroEL channel. This chain is Co-chaperonin GroES, found in Blochmanniella pennsylvanica (strain BPEN).